Here is a 460-residue protein sequence, read N- to C-terminus: V-type ATP synthase beta chain (460 aa).

This sequence belongs to the ATPase alpha/beta chains family.

In terms of biological role, produces ATP from ADP in the presence of a proton gradient across the membrane. The V-type beta chain is a regulatory subunit. The protein is V-type ATP synthase beta chain of Anaeromyxobacter sp. (strain Fw109-5).